The chain runs to 1222 residues: Probable disease resistance protein At5g45510 (1222 aa).

An ATP-binding site is contributed by 49-56 (GEAGIGKT). A coiled-coil region spans residues 122–183 (GERDEDEEEE…KLEAEKKLVD (62 aa)). Basic and acidic residues-rich tracts occupy residues 171-205 (AAEK…KEKT), 212-224 (GEDK…ERKP), 263-279 (RRQE…HAEG), and 286-322 (SGEK…HEKV). Disordered regions lie at residues 171–225 (AAEK…RKPY) and 263–327 (RRQE…PPTI). T293 is subject to Phosphothreonine. LRR repeat units lie at residues 654 to 676 (LLRV…KALT), 677 to 699 (KLNT…FFES), 702 to 724 (ELRS…SGLK), 725 to 747 (ELHC…QELV), 785 to 806 (KLQH…QDSA), 813 to 835 (SLTR…KPLS), 836 to 856 (GLQI…EVCF), 861 to 883 (ELKT…EDLS), 884 to 906 (SLNE…EKLE), 907 to 929 (NLEV…FEKM), and 931 to 951 (YLRV…PADT).

It belongs to the disease resistance NB-LRR family.

In terms of biological role, probable disease resistance protein. The polypeptide is Probable disease resistance protein At5g45510 (Arabidopsis thaliana (Mouse-ear cress)).